A 651-amino-acid polypeptide reads, in one-letter code: Histone-lysine N-methyltransferase family member SUVH2 (651 aa).

The tract at residues 1-28 (MSTLLPFPDLNLMPDSQSSTAGTTAGDT) is disordered. Positions 15–28 (DSQSSTAGTTAGDT) are enriched in low complexity. One can recognise a YDG domain in the interval 202-358 (DKHIVGPVTG…KFRLVRIEGQ (157 aa)). Positions 434–492 (TGCECKLSCTDDCLCARKNGGEFAYDDNGHLLKGKHVVFECGEFCTCGPSCKSRVTQKG) constitute a Pre-SET domain. The Zn(2+) site is built by C436, C438, C442, C446, C448, C474, C478, C480, and C484. An SET domain is found at 495-638 (NRLEVFRSKE…PLAELSLDYG (144 aa)).

Belongs to the class V-like SAM-binding methyltransferase superfamily. Histone-lysine methyltransferase family. Suvar3-9 subfamily. As to quaternary structure, self-interacts. Interacts with DNA-directed RNA polymerase V subunit NRPE1 and with DRD1 and DMS3. Binds to MORC1/CRT1. Expressed at low levels in leaves stems and flowers.

The protein resides in the nucleus. It is found in the chromosome. The protein localises to the centromere. Functionally, histone methyltransferase family member that plays a central role in gene silencing. Together with MORC6 and SUVH9, regulates the silencing of some transposable elements (TEs). According to PubMed:15775980, it is required for normal methylation of 'Lys-9' and 'Lys-27' of histone H3, 'Lys-20' of H4, and cytosine, but PubMed:19043555 see no significant effect on histone methylation when the gene is mutated. According to PubMed:19043555, the protein does not bind S-adenosyl-L-methionine and lacks methyltransferase activity. Instead, it may function downstream of DRM2 in RNA-directed DNA methylation, binding to methylated DNA and recruiting DNA-directed RNA polymerase V to chromatin. In Arabidopsis thaliana (Mouse-ear cress), this protein is Histone-lysine N-methyltransferase family member SUVH2 (SUVH2).